Here is a 287-residue protein sequence, read N- to C-terminus: Ventral anterior homeobox 1b (287 aa).

The span at 1–33 (MFEKTRDMDVRCNIEENGRISKPKDNKEIRESQ) shows a compositional bias: basic and acidic residues. The interval 1 to 55 (MFEKTRDMDVRCNIEENGRISKPKDNKEIRESQSKMPSTYPAPGSSEGCAKNKSS) is disordered. Residues 89-148 (PKRTRTSFTAEQLYRLEMEFQRCQYVVGRERTELARQLNLSETQVKVWFQNRRTKQKKDQ) constitute a DNA-binding region (homeobox).

Belongs to the EMX homeobox family.

The protein localises to the nucleus. In terms of biological role, involved in ventral eye development. The chain is Ventral anterior homeobox 1b (vax1-b) from Xenopus laevis (African clawed frog).